The sequence spans 533 residues: Glucose-6-phosphate isomerase (533 aa).

The active-site Proton donor is the E341. Residues H372 and K501 contribute to the active site.

It belongs to the GPI family.

It localises to the cytoplasm. It catalyses the reaction alpha-D-glucose 6-phosphate = beta-D-fructose 6-phosphate. It participates in carbohydrate biosynthesis; gluconeogenesis. It functions in the pathway carbohydrate degradation; glycolysis; D-glyceraldehyde 3-phosphate and glycerone phosphate from D-glucose: step 2/4. Catalyzes the reversible isomerization of glucose-6-phosphate to fructose-6-phosphate. The sequence is that of Glucose-6-phosphate isomerase from Cereibacter sphaeroides (strain ATCC 17023 / DSM 158 / JCM 6121 / CCUG 31486 / LMG 2827 / NBRC 12203 / NCIMB 8253 / ATH 2.4.1.) (Rhodobacter sphaeroides).